The primary structure comprises 131 residues: Biogenesis of lysosome-related organelles complex 1 subunit 5 (131 aa).

The protein belongs to the BLOC1S5 family. As to quaternary structure, component of the biogenesis of lysosome-related organelles complex-1 (BLOC-1) composed at least of blos-1, blos-2, blos-4, dsbn-1, glo-2, mutd-1 and snpn-1.

Functionally, component of the biogenesis of lysosome-related organelles complex-1 (BLOC-1) involved in gut granule biogenesis. The chain is Biogenesis of lysosome-related organelles complex 1 subunit 5 (mutd-1) from Caenorhabditis elegans.